A 352-amino-acid polypeptide reads, in one-letter code: Coproporphyrin III ferrochelatase (352 aa).

Fe-coproporphyrin III-binding residues include Ser-52 and Tyr-121. Fe(2+)-binding residues include His-178 and Glu-267.

It belongs to the ferrochelatase family.

The protein localises to the cytoplasm. The catalysed reaction is Fe-coproporphyrin III + 2 H(+) = coproporphyrin III + Fe(2+). It participates in porphyrin-containing compound metabolism; protoheme biosynthesis. In terms of biological role, involved in coproporphyrin-dependent heme b biosynthesis. Catalyzes the insertion of ferrous iron into coproporphyrin III to form Fe-coproporphyrin III. The chain is Coproporphyrin III ferrochelatase from Propionibacterium freudenreichii subsp. freudenreichii.